Here is a 609-residue protein sequence, read N- to C-terminus: Copper resistance protein A (609 aa).

The segment at residues 1 to 32 (MESRTSRRTFVKGLAAAGVLGGLGLWRSPSWA) is a signal peptide (tat-type signal). 4 residues coordinate Cu cation: H100, H102, H142, and H144. 5 tandem repeats follow at residues 367–374 (DDMGMGGM), 375–382 (DHGSMDGM), 408–415 (DHSKMSTM), 419–426 (DHGAMSGM), and 427–434 (DHGAMGGM). A 5 X 8 AA tandem repeats of D-H-X-X-M-X-G-M region spans residues 367–434 (DDMGMGGMDH…GMDHGAMGGM (68 aa)). Residues H542, H545, H547, H590, C591, H592, H596, and M601 each coordinate Cu cation.

This sequence belongs to the multicopper oxidase family. CopA subfamily. Predicted to be exported by the Tat system. The position of the signal peptide cleavage has been experimentally proven.

Its subcellular location is the periplasm. Functionally, mediates copper resistance by sequestration of copper in the periplasm along with the copper-binding protein CopC. May have oxidase activity. The chain is Copper resistance protein A (copA) from Pseudomonas syringae pv. tomato.